The chain runs to 407 residues: Arrestin red cell isoform 1 (407 aa).

Belongs to the arrestin family.

The protein resides in the cytoplasm. The chain is Arrestin red cell isoform 1 from Oncorhynchus mykiss (Rainbow trout).